Here is a 185-residue protein sequence, read N- to C-terminus: Ribosome-recycling factor (185 aa).

The protein belongs to the RRF family.

The protein localises to the cytoplasm. Its function is as follows. Responsible for the release of ribosomes from messenger RNA at the termination of protein biosynthesis. May increase the efficiency of translation by recycling ribosomes from one round of translation to another. This is Ribosome-recycling factor from Dehalococcoides mccartyi (strain CBDB1).